We begin with the raw amino-acid sequence, 347 residues long: Secretory carrier-associated membrane protein 3 (347 aa).

Residues 1 to 88 form a disordered region; that stretch reads MAQSRDGGNP…EPKNYGSYST (88 aa). Residues 1–170 lie on the Cytoplasmic side of the membrane; that stretch reads MAQSRDGGNP…QKTVSTMYYL (170 aa). The residue at position 32 (Ser32) is a Phosphoserine. Residue Thr37 is modified to Phosphothreonine. Residues Tyr41 and Tyr53 each carry the phosphotyrosine modification. Pro residues predominate over residues 49–66; sequence PPPAYEPPAPAPLPPPSA. Residues Ser72 and Ser76 each carry the phosphoserine modification. The residue at position 83 (Tyr83) is a Phosphotyrosine. Residue Ser85 is modified to Phosphoserine. 4 consecutive transmembrane segments (helical) span residues 171 to 191, 197 to 217, 247 to 267, and 277 to 297; these read WMCS…SFCV, AGFG…FVCW, FVLQ…SALV, and VLML…IVML. Over 298-347 the chain is Cytoplasmic; it reads KRIHSLYRRTGASFQKAQQEFAAGVFSNPAVRTAAANAAAGAAENAFRAP. Lys313 participates in a covalent cross-link: Glycyl lysine isopeptide (Lys-Gly) (interchain with G-Cter in SUMO1).

This sequence belongs to the SCAMP family. As to quaternary structure, interacts with NEDD4, NEDD4L and TSG101. Interacts with RNF126. In terms of processing, monoubiquitinated. In terms of tissue distribution, widely expressed, with highest expression in heart and skeletal muscle.

It is found in the membrane. Functionally, functions in post-Golgi recycling pathways. Acts as a recycling carrier to the cell surface. This Homo sapiens (Human) protein is Secretory carrier-associated membrane protein 3 (SCAMP3).